We begin with the raw amino-acid sequence, 367 residues long: Peptide chain release factor 2 (367 aa).

Gln-254 bears the N5-methylglutamine mark.

This sequence belongs to the prokaryotic/mitochondrial release factor family. Methylated by PrmC. Methylation increases the termination efficiency of RF2.

It is found in the cytoplasm. In terms of biological role, peptide chain release factor 2 directs the termination of translation in response to the peptide chain termination codons UGA and UAA. The chain is Peptide chain release factor 2 from Neisseria gonorrhoeae (strain ATCC 700825 / FA 1090).